The following is a 407-amino-acid chain: E3 ubiquitin-protein ligase TRIM13 (407 aa).

The segment at 10-58 (CPICCSLFDDPRVLPCSHNFCKKCLEGLLEGNVRNSLWRPSPFKCPTCR) adopts an RING-type zinc-finger fold. The B box-type zinc-finger motif lies at 89-131 (PKMPVCKEHLGQPLNIFCVTDMQLICGVCATRGSHTKHVFSSI). Residues cysteine 94, histidine 97, cysteine 117, and histidine 123 each contribute to the Zn(2+) site. The stretch at 172–200 (LQLLTKDSDKVKEFFEKLQHTLDQKKNEI) forms a coiled coil. Residues 316–336 (LLLMAVVLLGLLVFFGPTVFL) form a helical membrane-spanning segment.

In terms of assembly, interacts (via C-terminal domain) with VCP. Interacts with AKT1; the interaction ubiquitinates AKT1 and leads to its proteasomal degradation. Interacts with MDM2; the interaction ubiquitinates AKT1 and leads to its proteasomal degradation. Interacts with p62/SQSTM1. Interacts with TRAF6. Interacts with IKBKG/NEMO. Post-translationally, auto-ubiquitinated; requires the RING-type zinc finger. Auto-polyubiquitination leads to proteasomal degradation.

The protein localises to the endoplasmic reticulum membrane. The enzyme catalyses S-ubiquitinyl-[E2 ubiquitin-conjugating enzyme]-L-cysteine + [acceptor protein]-L-lysine = [E2 ubiquitin-conjugating enzyme]-L-cysteine + N(6)-ubiquitinyl-[acceptor protein]-L-lysine.. Its pathway is protein modification; protein ubiquitination. Functionally, endoplasmic reticulum (ER) membrane anchored E3 ligase involved in the retrotranslocation and turnover of membrane and secretory proteins from the ER through a set of processes named ER-associated degradation (ERAD). This process acts on misfolded proteins as well as in the regulated degradation of correctly folded proteins. Enhances ionizing radiation-induced p53/TP53 stability and apoptosis via ubiquitinating MDM2 and AKT1 and decreasing AKT1 kinase activity through MDM2 and AKT1 proteasomal degradation. Regulates ER stress-induced autophagy, and may act as a tumor suppressor. Also plays a role in innate immune response by stimulating NF-kappa-B activity in the TLR2 signaling pathway. Ubiquitinates TRAF6 via the 'Lys-29'-linked polyubiquitination chain resulting in NF-kappa-B activation. Participates as well in T-cell receptor-mediated NF-kappa-B activation. In the presence of TNF, modulates the IKK complex by regulating IKBKG/NEMO ubiquitination leading to the repression of NF-kappa-B. This Rattus norvegicus (Rat) protein is E3 ubiquitin-protein ligase TRIM13 (Trim13).